We begin with the raw amino-acid sequence, 344 residues long: Enoyl-[acyl-carrier-protein] reductase, mitochondrial (344 aa).

A mitochondrion-targeting transit peptide spans M1–A14. The active-site Proton donor is the Y69. Residues N142, N168 to V171, R191 to R193, Y255 to M258, F280 to M282, and K338 contribute to the NADP(+) site.

This sequence belongs to the zinc-containing alcohol dehydrogenase family. Quinone oxidoreductase subfamily. As to quaternary structure, homodimer.

It is found in the mitochondrion. It carries out the reaction a 2,3-saturated acyl-[ACP] + NADP(+) = a (2E)-enoyl-[ACP] + NADPH + H(+). Its function is as follows. Catalyzes the NADPH-dependent reduction of trans-2-enoyl thioesters in mitochondrial fatty acid synthesis (fatty acid synthesis type II). Fatty acid chain elongation in mitochondria uses acyl carrier protein (ACP) as an acyl group carrier, but the enzyme accepts both ACP and CoA thioesters as substrates in vitro. May provide the octanoyl chain used for lipoic acid biosynthesis, regulating protein lipoylation and mitochondrial respiratory activity. Involved in iron homeostasis; affecting Fe-S cluster assembly and ceramide metabolism. Required for proper morphology and bioenergetic functions of mitochondria. Required for maintenance of neurons. The protein is Enoyl-[acyl-carrier-protein] reductase, mitochondrial of Caenorhabditis elegans.